Consider the following 65-residue polypeptide: Large ribosomal subunit protein bL35 (65 aa).

Residues 1–25 are disordered; that stretch reads MPKLKTKSSAAKRFKKTGKGGFKHR.

The protein belongs to the bacterial ribosomal protein bL35 family.

The polypeptide is Large ribosomal subunit protein bL35 (Francisella tularensis subsp. holarctica (strain FTNF002-00 / FTA)).